A 547-amino-acid chain; its full sequence is MKSLTHLSSYRALSTHFSIIKDLHMRVLFKEDENRGFRYFLQSGDLKLDYSKNRISDETLKLLFDLANECSLKNKIKAMFEGQKINNTENRAVLHTALRNKTNRSVKIDDMDIMPNVREVLAKMQKFSDSLRTGSWLGYTNQIITDVVNIGIGGSDLGALMVCKALKNYAHPRLHMHFVSNVDGTQLQDVLERVHPASTLFIVASKTFSTQETLTNAFTARKWFLKHALDEKHIAKHFVAVSTNKEAVKDFGIEPENMFEFWNWVGGRYSLWSAIGLAIMIYLGKENFSSLLEGAYLMDEHFYNEPFEKNMPVIMALIGIWYINFFDAGSHIIAPYDSVLRYFPKFIQQLDMESNGKQIRKNGKKVDYDTGPIIWGDTGINAQHAFFQLLHQGTHLSPIDLIASLNKKGNLPDHHEILLSNVFAQAEAFMRGKTLEEVQEEMAKKGLKEDQIQKLAPHRVFSGNRPSNILLLDEIHPRSIGSLVALYEHKIFVQGVIWDINSFDQWGVELGKELAKTILSELKGGKTQEHDSSTNHLIQIYKNFNSN.

Catalysis depends on Glu-353, which acts as the Proton donor. Active-site residues include His-384 and Lys-512.

Belongs to the GPI family.

It is found in the cytoplasm. It catalyses the reaction alpha-D-glucose 6-phosphate = beta-D-fructose 6-phosphate. It participates in carbohydrate biosynthesis; gluconeogenesis. The protein operates within carbohydrate degradation; glycolysis; D-glyceraldehyde 3-phosphate and glycerone phosphate from D-glucose: step 2/4. Functionally, catalyzes the reversible isomerization of glucose-6-phosphate to fructose-6-phosphate. The sequence is that of Glucose-6-phosphate isomerase from Campylobacter jejuni subsp. doylei (strain ATCC BAA-1458 / RM4099 / 269.97).